A 495-amino-acid polypeptide reads, in one-letter code: Glycerol kinase (495 aa).

ADP is bound at residue Thr-16. Thr-16 and Thr-17 together coordinate ATP. A sn-glycerol 3-phosphate-binding site is contributed by Thr-16. Position 20 (Arg-20) interacts with ADP. Residues Arg-86, Glu-87, Tyr-138, and Asp-246 each contribute to the sn-glycerol 3-phosphate site. Glycerol is bound by residues Arg-86, Glu-87, Tyr-138, Asp-246, and Gln-247. ADP contacts are provided by Thr-268 and Gly-316. 4 residues coordinate ATP: Thr-268, Gly-316, Gln-320, and Gly-417. Positions 417 and 421 each coordinate ADP.

The protein belongs to the FGGY kinase family.

It carries out the reaction glycerol + ATP = sn-glycerol 3-phosphate + ADP + H(+). It functions in the pathway polyol metabolism; glycerol degradation via glycerol kinase pathway; sn-glycerol 3-phosphate from glycerol: step 1/1. Its activity is regulated as follows. Inhibited by fructose 1,6-bisphosphate (FBP). Functionally, key enzyme in the regulation of glycerol uptake and metabolism. Catalyzes the phosphorylation of glycerol to yield sn-glycerol 3-phosphate. The protein is Glycerol kinase of Synechocystis sp. (strain ATCC 27184 / PCC 6803 / Kazusa).